The primary structure comprises 564 residues: MSENAQKATEFKNQGNAAFSSKDYNSAVKCFDQAIELDPSNHILYSNRSASLLALDKNEDALTDAKKAIELKPDWSKGYLRETNALYKLGRFEEAEKSAEAGLKIDPTNQQLEDALEDAQYATTGAKDPASAMANLFSAQNLTKLRFNPKTAPFFQQPDFVAIMDQISKNPSLFSQYIADQRFSTCLGVLLGVDINQGPGAPPQSQQPTPQQPTPTPQQPTPTPQQPKPTEAPKKPEAPPMTESQKERDLGNKAYAKKEFEQAIVHYDKAVELDSSDILAMNNKAAVLIEQQKLDEAIETCKKALEKAQEIRADYRVKSKVYTRLGNIYLKKNQLDDAYKAYSSAVLEDKNADTTANMKKIEKLKKQRDDEAYLSVDQSIIEKNKGVEHFKKGEFPEAIKCFEEAIRRNPKDHTIYSNRSAAYSKLLEYKLAIKDADKCIELEPTFIKGYIRKGTALFAMREYQQALEVYDQGLRIEANNPELLDLSRKTVAALTKLQSTLTDEERLQQAAKDPEIQKILSDPIMNQILKDMSENPAAAQDHLKNPLIMAKFQKLVNAGIVKLG.

TPR repeat units follow at residues 8–41, 43–75, and 76–109; these read ATEF…DPSN, ILYS…KPDW, and SKGY…DPTN. Residues 139 to 177 form the STI1 1 domain; the sequence is AQNLTKLRFNPKTAPFFQQPDFVAIMDQISKNPSLFSQY. Low complexity predominate over residues 197 to 209; that stretch reads QGPGAPPQSQQPT. A disordered region spans residues 197–249; sequence QGPGAPPQSQQPTPQQPTPTPQQPTPTPQQPKPTEAPKKPEAPPMTESQKERD. Residues 210-227 are compositionally biased toward pro residues; the sequence is PQQPTPTPQQPTPTPQQP. TPR repeat units lie at residues 244-277, 279-311, 319-352, 379-412, 414-446, and 447-480; these read SQKE…DSSD, LAMN…AQEI, SKVY…DKNA, SIIE…NPKD, TIYS…EPTF, and IKGY…EANN. The STI1 2 domain occupies 513-552; the sequence is DPEIQKILSDPIMNQILKDMSENPAAAQDHLKNPLIMAKF.

The protein localises to the cytoplasm. Its subcellular location is the nucleus. The polypeptide is Protein STIP1 homolog (sti1) (Dictyostelium discoideum (Social amoeba)).